The primary structure comprises 258 residues: Ribosomal RNA large subunit methyltransferase E (258 aa).

The S-adenosyl-L-methionine site is built by G58, W60, D78, D96, and D120. K160 functions as the Proton acceptor in the catalytic mechanism.

The protein belongs to the class I-like SAM-binding methyltransferase superfamily. RNA methyltransferase RlmE family.

It localises to the cytoplasm. The catalysed reaction is uridine(2552) in 23S rRNA + S-adenosyl-L-methionine = 2'-O-methyluridine(2552) in 23S rRNA + S-adenosyl-L-homocysteine + H(+). Specifically methylates the uridine in position 2552 of 23S rRNA at the 2'-O position of the ribose in the fully assembled 50S ribosomal subunit. The sequence is that of Ribosomal RNA large subunit methyltransferase E from Methanococcus maripaludis (strain C5 / ATCC BAA-1333).